Consider the following 716-residue polypeptide: Translation initiation factor IF-2 (716 aa).

The disordered stretch occupies residues 53 to 135 (GGAGVTSQKP…PLKPKKELPE (83 aa)). A compositionally biased stretch (polar residues) spans 57–83 (VTSQKPAETNKNKPQGINQQPAGNQPN). The segment covering 93 to 109 (VQNNQFNKNKKNNNNNK) has biased composition (low complexity). The tr-type G domain occupies 217–386 (IRPPVVTIMG…LLVSEVEELK (170 aa)). Positions 226–233 (GHVDHGKT) are G1. 226–233 (GHVDHGKT) contributes to the GTP binding site. Residues 251–255 (GITQH) are G2. The tract at residues 272 to 275 (DTPG) is G3. GTP-binding positions include 272 to 276 (DTPGH) and 326 to 329 (NKVD). Residues 326–329 (NKVD) form a G4 region. The tract at residues 362–364 (SAL) is G5.

The protein belongs to the TRAFAC class translation factor GTPase superfamily. Classic translation factor GTPase family. IF-2 subfamily.

The protein localises to the cytoplasm. One of the essential components for the initiation of protein synthesis. Protects formylmethionyl-tRNA from spontaneous hydrolysis and promotes its binding to the 30S ribosomal subunits. Also involved in the hydrolysis of GTP during the formation of the 70S ribosomal complex. In Bacillus velezensis (strain DSM 23117 / BGSC 10A6 / LMG 26770 / FZB42) (Bacillus amyloliquefaciens subsp. plantarum), this protein is Translation initiation factor IF-2.